The primary structure comprises 699 residues: tRNA 5-methylaminomethyl-2-thiouridine biosynthesis bifunctional protein MnmC (699 aa).

A tRNA (mnm(5)s(2)U34)-methyltransferase region spans residues 1–247 (MPAVSRPLPP…KREMLCGEIA (247 aa)). The segment at 275–699 (IGAGLAGTSV…QPSPTTTETP (425 aa)) is FAD-dependent cmnm(5)s(2)U34 oxidoreductase. Residues 675–699 (RGNATLSTSSPNDDAQPSPTTTETP) form a disordered region.

In the N-terminal section; belongs to the methyltransferase superfamily. tRNA (mnm(5)s(2)U34)-methyltransferase family. The protein in the C-terminal section; belongs to the DAO family. Requires FAD as cofactor.

Its subcellular location is the cytoplasm. The enzyme catalyses 5-aminomethyl-2-thiouridine(34) in tRNA + S-adenosyl-L-methionine = 5-methylaminomethyl-2-thiouridine(34) in tRNA + S-adenosyl-L-homocysteine + H(+). Catalyzes the last two steps in the biosynthesis of 5-methylaminomethyl-2-thiouridine (mnm(5)s(2)U) at the wobble position (U34) in tRNA. Catalyzes the FAD-dependent demodification of cmnm(5)s(2)U34 to nm(5)s(2)U34, followed by the transfer of a methyl group from S-adenosyl-L-methionine to nm(5)s(2)U34, to form mnm(5)s(2)U34. The sequence is that of tRNA 5-methylaminomethyl-2-thiouridine biosynthesis bifunctional protein MnmC from Chromohalobacter salexigens (strain ATCC BAA-138 / DSM 3043 / CIP 106854 / NCIMB 13768 / 1H11).